The chain runs to 116 residues: Dynein light chain Tctex-type 3 (116 aa).

At Tyr-4 the chain carries 3'-nitrotyrosine.

This sequence belongs to the dynein light chain Tctex-type family. Homodimer. The cytoplasmic dynein 1 complex consists of two catalytic heavy chains (HCs) and a number of non-catalytic subunits presented by intermediate chains (ICs), light intermediate chains (LICs) and light chains (LCs); the composition seems to vary in respect to the IC, LIC and LC composition. The heavy chain homodimer serves as a scaffold for the probable homodimeric assembly of the respective non-catalytic subunits. The ICs and LICs bind directly to the HC dimer and the LCs assemble on the IC dimer. DYNLT1 and DYNLT3 compete for association with dynein IC (DYNC1I1 or DYNC1I2). Self-associates. Interacts with DYNC1I1 and DYNC1I2. Interacts with BUB3. Interacts with SATB1 in nucleus to form complex with matrix attachment regions (MARs) of DNA.

It is found in the nucleus. The protein localises to the cytoplasm. It localises to the cytoskeleton. Its subcellular location is the chromosome. The protein resides in the centromere. It is found in the kinetochore. In terms of biological role, acts as one of several non-catalytic accessory components of the cytoplasmic dynein 1 complex that are thought to be involved in linking dynein to cargos and to adapter proteins that regulate dynein function. Cytoplasmic dynein 1 acts as a motor for the intracellular retrograde motility of vesicles and organelles along microtubules. Probably binds BUB3 as part of transport cargo. Required for the efficient progression through mitosis. The chain is Dynein light chain Tctex-type 3 (DYNLT3) from Ovis aries (Sheep).